The chain runs to 634 residues: Frizzled and smoothened-like protein D (634 aa).

The signal sequence occupies residues 1-21; that stretch reads MINKFKFYLIFLKLILILVNC. Topologically, residues 22–257 are extracellular; it reads QNSLNDYGFG…QMDSVINMSK (236 aa). In terms of domain architecture, FZ spans 34–178; it reads DESSICTSYI…LTKYGYTANG (145 aa). N-linked (GlcNAc...) asparagine glycosylation is found at Asn126, Asn168, Asn215, Asn243, and Asn254. The chain crosses the membrane as a helical span at residues 258–278; that stretch reads AMSSISFVLSLFNVITFGLLI. The Cytoplasmic segment spans residues 279 to 287; sequence KKKSKYNVC. A helical transmembrane segment spans residues 288 to 308; sequence IALMAIGSSFIYLSDIINYGV. The Extracellular portion of the chain corresponds to 309 to 335; the sequence is GIEKQLCPEPGRVATQRVDSLCGFTGS. A helical transmembrane segment spans residues 336–356; sequence IFHIGITLCVLWSMTMGIVLY. The Cytoplasmic segment spans residues 357 to 368; it reads SKIKQFKLPNFR. A helical membrane pass occupies residues 369–389; the sequence is YFLIGNLSFTVVTLIILASAK. The Extracellular portion of the chain corresponds to 390–410; that stretch reads KFQGGNGFLECWMRDRWYVVA. A helical transmembrane segment spans residues 411–431; it reads IFWIPCGIALLLGVLSICGVI. Residues 432-454 lie on the Cytoplasmic side of the membrane; that stretch reads FEIYKISKNVSLKDSKVVIRELK. The helical transmembrane segment at 455 to 475 threads the bilayer; the sequence is PFVLVVTVSASLIYLFVFYFD. Residues 476–513 lie on the Extracellular side of the membrane; sequence SESKYDFYKKGVEDYILCLLTSENPLDECYTVGPNFNS. Residues 514–534 traverse the membrane as a helical segment; sequence YFMFYFLIRFFGILFFGIFGT. Over 535 to 634 the chain is Cytoplasmic; it reads SEIARNAWTE…MEIELDSIDI (100 aa). The disordered stretch occupies residues 560-624; the sequence is VSSSTRGGGG…NNNNNDNNNK (65 aa). 2 stretches are compositionally biased toward low complexity: residues 572-592 and 609-622; these read SGIKSSSSSSNSGVCNNNNST and DNTIITNNNNNDNN.

It belongs to the G-protein coupled receptor Fz/Smo family.

Its subcellular location is the membrane. The polypeptide is Frizzled and smoothened-like protein D (fslD) (Dictyostelium discoideum (Social amoeba)).